A 4576-amino-acid chain; its full sequence is Mucin-2 (4576 aa).

The signal sequence occupies residues 1 to 20; that stretch reads MGLPLARLVAACLVLALAKG. Phosphoserine is present on S21. A VWFD 1 domain is found at 32 to 205; it reads HVCSTWGDFH…KINKPEVQCE (174 aa). 29 cysteine pairs are disulfide-bonded: C34–C166, C56–C204, C64–C163, C216–C253, C223–C248, C235–C273, C255–C261, C263–C289, C293–C327, C306–C319, C310–C349, C329–C343, C351–C373, C368–C385, C371–C380, C389–C526, C411–C561, C433–C441, C572–C617, C586–C612, C599–C637, C619–C625, C627–C652, C659–C696, C672–C686, C676–C716, C698–C710, C718–C740, and C738–C747. D46 lines the Ca(2+) pocket. Residues M143 and M151 each coordinate Cu(+). E153 contributes to the Cu(2+) binding site. N160 carries an N-linked (GlcNAc...) asparagine glycan. Ca(2+)-binding residues include D168, N170, and E177. H275 is a binding site for Cu(2+). The 57-residue stretch at 293–349 folds into the TIL domain; that stretch reads CPNNMVYLESSSPCVDTCSHLEVSSLCEEHYMDGCFCPEGTVYDDITGSGCIPVSQC. Residue H322 participates in Cu(2+) binding. Position 324 (M324) interacts with Cu(+). Residues 387-562 form the VWFD 2 domain; it reads ETCALEGGSH…NTWKAQSSCH (176 aa). D401 provides a ligand contact to Ca(2+). N421 carries an N-linked (GlcNAc...) asparagine glycan. Residues N528, N530, L532, D535, and D536 each contribute to the Ca(2+) site. N668 carries N-linked (GlcNAc...) asparagine glycosylation. Residue N768 is glycosylated (N-linked (GlcNAc...) asparagine). Intrachain disulfides connect C782/C818, C800/C812, C820/C843, C837/C855, C841/C850, C859/C990, C881/C1025, C890/C987, C907/C914, C1035/C1078, C1049/C1073, C1060/C1100, C1080/C1088, C1090/C1115, C1106/C1135, C1119/C1161, C1143/C1185, C1165/C1179, C1187/C1211, C1206/C1236, and C1209/C1219. An N-linked (GlcNAc...) asparagine glycan is attached at N838. Residues 857–1026 enclose the VWFD 3 domain; it reads STCSIYGSGH…NSWKEASTCP (170 aa). D871 contacts Ca(2+). An N-linked (GlcNAc...) asparagine glycan is attached at N893. Residues N992, D994, N999, and D1000 each coordinate Ca(2+). Residues N1137 and N1152 are each glycosylated (N-linked (GlcNAc...) asparagine). N-linked (GlcNAc...) asparagine glycosylation is found at N1213, N1228, and N1244. Residues T1265, T1268, T1269, T1281, and T1292 are each glycosylated (O-linked (GalNAc) threonine). Ca(2+)-binding residues include N1305, H1308, G1315, D1316, and E1318. A glycan (N-linked (GlcNAc...) asparagine) is linked at N1352. Ca(2+)-binding residues include D1375 and Y1376. Tandem repeats lie at residues 1395–1415, 1416–1427, 1428–1437, 1438–1453, and 1454–1460. The disordered stretch occupies residues 1395–2866; it reads SPTTSTTTLS…PTTSSTFTTP (1472 aa). The stretch at 1478-1497 is one 7B repeat; the sequence is PSTTSPTTPSTTPSTTSPTT. The 8A repeat unit spans residues 1498 to 1510; that stretch reads PSTTSPTTPTSTS. The stretch at 1530-1556 is one 9B repeat; that stretch reads SPTTSPTTPSTTSPTISTTTSTISPTT. Residues 1557-1572 form a 10A repeat; sequence PSTTSPNTPSTTSSTI. A 10B repeat occupies 1573–1588; sequence PSTTSPTTPSTTSPTI. One copy of the 11A repeat lies at 1589–1607; it reads STTTSTTSPTTPSTTSPTT. Residues 1608–1634 form an 11B repeat; sequence PSTTSPTTPSTTSPTISTTTLTTSPTT. Tandem repeats lie at residues 1635-1642 and 1665-1681. 2 N-linked (GlcNAc...) asparagine glycosylation sites follow: N2529 and N2910. Low complexity-rich tracts occupy residues 2975–3623 and 3631–3706; these read PSST…GSTP and PGPT…TSPS. Positions 2975–3706 are disordered; the sequence is PSSTTTETPT…SSTSPITSPS (732 aa). 3 N-linked (GlcNAc...) asparagine glycosylation sites follow: N3734, N3745, and N3756. A compositionally biased stretch (pro residues) spans 3764–3774; the sequence is STPTPSTPTPT. The disordered stretch occupies residues 3764 to 3806; sequence STPTPSTPTPTPSQTTTPSTTSSKSTPSTPQSTSPKSTLSTPT. A compositionally biased stretch (low complexity) spans 3775–3806; it reads PSQTTTPSTTSSKSTPSTPQSTSPKSTLSTPT. N3823, N3830, and N3903 each carry an N-linked (GlcNAc...) asparagine glycan. A VWFD 4 domain is found at 3880–4063; it reads CYCTGWGDPH…VNDPSKPHCP (184 aa). 3 disulfides stabilise this stretch: C3882–C4023, C3904–C4062, and C3928–C3936. Residues N3991, N4017, N4028, N4083, N4149, N4183, N4254, N4277, N4351, N4366, N4434, N4465, and N4488 are each glycosylated (N-linked (GlcNAc...) asparagine). VWFC domains follow at residues 4213–4282 and 4320–4387; these read CVGP…TSCK and GVCV…KKCQ. 4 cysteine pairs are disulfide-bonded: C4471–C4518, C4485–C4532, C4494–C4548, and C4498–C4550. A CTCK domain is found at 4471-4556; the sequence is CSAVSVMKEI…SCLCQDTVCG (86 aa).

In terms of assembly, homomultimer; disulfide-linked. The N- and C-terminus mediate their assembly into higher order structures to form filaments. The CTCK domains of two polypeptides associate in the endoplasmic reticulum to generate intermolecularly disulfide-bonded dimers. These dimers progress to the Golgi apparatus, which is a more acidic environment than the endoplasmic reticulum. Under acidic conditions, the N-termini form non-covalent intermolecular interactions that juxtapose assemblies of the third VWD domain (VWD3) from different CTCK-linked dimers. The VWD3 assemblies then become disulfide bonded to one another to produce long, disulfide-linked polymers that remain highly compact until secretion. Interacts with FCGBP. Interacts with AGR2; disulfide-linked. Post-translationally, O-glycosylated. O-glycosylation is required for mucin assembly. Goblet cells synthesize two forms of mucin that differ in branched chain O-glycosylation and the site of production in the colon. In terms of processing, may undergo proteolytic cleavage in the outer mucus layer of the colon, contributing to the expanded volume and loose nature of this layer which allows for bacterial colonization in contrast to the inner mucus layer which is dense and devoid of bacteria. At low pH of 6 and under, undergoes autocatalytic cleavage in vitro in the N-terminal region of the fourth VWD domain. It is likely that this also occurs in vivo and is triggered by the low pH of the late secretory pathway. In terms of tissue distribution, highly expressed in goblet cells of the colon with lower levels in the small intestine and no expression in the stomach (at protein level).

The protein localises to the secreted. Coats the epithelia of the intestines and other mucus membrane-containing organs to provide a protective, lubricating barrier against particles and infectious agents at mucosal surfaces. Major constituent of the colon mucus, which is mainly formed by large polymeric networks of MUC2 secreted by goblet cells that cover the exposed surfaces of intestine. MUC2 networks form hydrogels that guard the underlying epithelium from pathogens and other hazardous matter entering from the outside world, while permitting nutrient absorption and gas exchange. Acts as a divalent copper chaperone that protects intestinal cells from copper toxicity and facilitates nutritional copper unptake into cells. Binds both Cu(2+) and its reduced form, Cu(1+), at two juxtaposed binding sites: Cu(2+), once reduced to Cu(1+) by vitamin C (ascorbate) or other dietary antioxidants, transits to the other binding site. MUC2-bound Cu(1+) is protected from oxidation in aerobic environments, and can be released for nutritional delivery to cells. Mucin gels store antimicrobial molecules that participate in innate immunity. Mucin glycoproteins also house and feed the microbiome, lubricate tissue surfaces, and may facilitate the removal of contaminants and waste products from the body. Goblet cells synthesize two forms of MUC2 mucin that differ in branched chain O-glycosylation and the site of production in the colon: a (1) 'thick' mucus that wraps the microbiota to form fecal pellets is produced in the proximal, ascending colon. 'Thick' mucus transits along the descending colon and is lubricated by a (2) 'thin' MUC2 mucus produced in the distal colon which adheres to the 'thick' mucus. In Mus musculus (Mouse), this protein is Mucin-2.